Consider the following 105-residue polypeptide: Probable molt-inhibiting hormone (105 aa).

Residues 1–28 (MYRMPMRFWLTAVVMVVVGALLLDTASA) form the signal peptide. Disulfide bonds link Cys35-Cys72, Cys52-Cys68, and Cys55-Cys81.

It belongs to the arthropod CHH/MIH/GIH/VIH hormone family. Expressed in the postmolt, intermolt, and premolt stages of the shrimp eyestalks and the brain.

It localises to the secreted. Functionally, inhibits Y-organs where molting hormone (ecdysteroid) is secreted. A molting cycle is initiated when MIH secretion diminishes or stops. This chain is Probable molt-inhibiting hormone, found in Metapenaeus ensis (Greasyback shrimp).